Consider the following 1585-residue polypeptide: Sterol 3-beta-glucosyltransferase (1585 aa).

Pro residues predominate over residues 1 to 18 (MSPPISPTPPPLQPPFPP). 3 disordered regions span residues 1 to 151 (MSPP…ESSF), 177 to 225 (PWEE…PTHT), and 249 to 279 (YQYA…LPKG). 3 stretches are compositionally biased toward polar residues: residues 65-92 (DQAT…NAIT), 105-123 (DAQT…STHE), and 132-148 (PRTS…QMAE). Residues 178–194 (WEEDDDSDDGEDDDEFI) show a composition bias toward acidic residues. Positions 255 to 273 (ETSSRRTSAAGSESSSEGE) are enriched in low complexity. Positions 387–555 (ERLMEVFGLE…EAIVDVEKSP (169 aa)) constitute a GRAM 1 domain. Positions 438-530 (LLVKSGPLHK…WVKAIQKVMF (93 aa)) constitute a PH domain. 2 disordered regions span residues 625–645 (TSHA…LGMA) and 666–852 (DGEP…GSES). Positions 670 to 689 (LEEHSQGPHHNDEDASHLPH) are enriched in basic and acidic residues. 3 stretches are compositionally biased toward polar residues: residues 760 to 785 (TDSS…QASV), 806 to 817 (NKPSVVDSNSAE), and 827 to 840 (SWTS…QMVK). The GRAM 2 domain occupies 862 to 933 (RKFRTFFALS…RDLYGLKAQK (72 aa)). S1043, R1044, D1046, I1358, H1360, H1373, G1377, T1378, D1397, and Q1398 together coordinate UDP-alpha-D-glucose. Residues 1499-1552 (NRVRSRSRSRSRSSQGRFSPRRHTVDDDGWSVVSGGSRSRSGSASAVTSPERRP) are disordered. Low complexity predominate over residues 1529–1545 (SVVSGGSRSRSGSASAV).

It belongs to the glycosyltransferase 28 family.

The protein localises to the cytoplasm. Its subcellular location is the membrane. The catalysed reaction is a sterol + UDP-alpha-D-glucose = a sterol 3-beta-D-glucoside + UDP + H(+). It catalyses the reaction ergosterol + UDP-alpha-D-glucose = ergosteryl 3-beta-D-glucoside + UDP + H(+). Sterol glycosyltransferase responsible for the glycosylation of ergosterol to form ergosterol-glucoside. In Cryptococcus neoformans var. neoformans serotype D (strain B-3501A) (Filobasidiella neoformans), this protein is Sterol 3-beta-glucosyltransferase.